Reading from the N-terminus, the 58-residue chain is Potassium channel toxin alpha-KTx 26.2 (58 aa).

Positions M1–A19 are cleaved as a signal peptide. 3 disulfide bridges follow: C31–C49, C35–C54, and C39–C56.

This sequence belongs to the short scorpion toxin superfamily. Potassium channel inhibitor family. Alpha-KTx 26 subfamily. Expressed by the venom gland.

It localises to the secreted. In terms of biological role, inhibits voltage-gated potassium channels. This is Potassium channel toxin alpha-KTx 26.2 from Lychas mucronatus (Chinese swimming scorpion).